The following is a 178-amino-acid chain: Crossover junction endodeoxyribonuclease RuvC (178 aa).

Active-site residues include Asp-21, Glu-81, and His-154. Positions 21, 81, and 154 each coordinate Mg(2+).

Belongs to the RuvC family. As to quaternary structure, homodimer which binds Holliday junction (HJ) DNA. The HJ becomes 2-fold symmetrical on binding to RuvC with unstacked arms; it has a different conformation from HJ DNA in complex with RuvA. In the full resolvosome a probable DNA-RuvA(4)-RuvB(12)-RuvC(2) complex forms which resolves the HJ. Requires Mg(2+) as cofactor.

Its subcellular location is the cytoplasm. It catalyses the reaction Endonucleolytic cleavage at a junction such as a reciprocal single-stranded crossover between two homologous DNA duplexes (Holliday junction).. In terms of biological role, the RuvA-RuvB-RuvC complex processes Holliday junction (HJ) DNA during genetic recombination and DNA repair. Endonuclease that resolves HJ intermediates. Cleaves cruciform DNA by making single-stranded nicks across the HJ at symmetrical positions within the homologous arms, yielding a 5'-phosphate and a 3'-hydroxyl group; requires a central core of homology in the junction. The consensus cleavage sequence is 5'-(A/T)TT(C/G)-3'. Cleavage occurs on the 3'-side of the TT dinucleotide at the point of strand exchange. HJ branch migration catalyzed by RuvA-RuvB allows RuvC to scan DNA until it finds its consensus sequence, where it cleaves and resolves the cruciform DNA. This is Crossover junction endodeoxyribonuclease RuvC from Treponema denticola (strain ATCC 35405 / DSM 14222 / CIP 103919 / JCM 8153 / KCTC 15104).